The chain runs to 801 residues: Na(+)/H(+) antiporter subunit A1 (801 aa).

Transmembrane regions (helical) follow at residues 1–21 (MSLL…IPIL), 28–48 (IHLG…MLTL), 79–99 (LGLL…LYSI), 117–137 (LFMG…LYLF), 166–186 (LIIT…LAIP), 206–226 (PFFI…SAQF), 265–285 (IFAA…ITLF), 300–320 (ILAF…GIGA), 337–357 (FTAA…LFMI), 373–393 (LGGL…TALS), 427–447 (LGYL…VYSI), 472–492 (ILML…GLFP), 522–542 (GLTP…LLIV), 591–611 (LVII…SVPF), 623–643 (IFEV…LFAK), 646–666 (LFNI…FIFF), 671–691 (LALT…LCFY), 707–727 (LTNA…GLIA), and 764–784 (MDTL…YTMI).

It belongs to the CPA3 antiporters (TC 2.A.63) subunit A family. As to quaternary structure, may form a heterooligomeric complex that consists of seven subunits: mnhA1, mnhB1, mnhC1, mnhD1, mnhE1, mnhF1 and mnhG1.

It is found in the cell membrane. Its function is as follows. Mnh complex is a Na(+)/H(+) antiporter involved in Na(+) excretion. This is Na(+)/H(+) antiporter subunit A1 (mnhA1) from Staphylococcus aureus (strain bovine RF122 / ET3-1).